A 251-amino-acid polypeptide reads, in one-letter code: Flap endonuclease Xni (251 aa).

D104 is a Mg(2+) binding site. The 90-residue stretch at 160 to 249 (VQPQQLPDYW…IDGNLQQLRL (90 aa)) folds into the 5'-3' exonuclease domain. K(+) is bound by residues L171, A172, P180, V182, and I185. Residues 184-189 (GIGPKS) are interaction with DNA.

Belongs to the Xni family. Mg(2+) serves as cofactor. It depends on K(+) as a cofactor.

In terms of biological role, has flap endonuclease activity. During DNA replication, flap endonucleases cleave the 5'-overhanging flap structure that is generated by displacement synthesis when DNA polymerase encounters the 5'-end of a downstream Okazaki fragment. The polypeptide is Flap endonuclease Xni (Shigella flexneri serotype 5b (strain 8401)).